A 430-amino-acid polypeptide reads, in one-letter code: Enolase (430 aa).

Gln-163 is a (2R)-2-phosphoglycerate binding site. Glu-205 serves as the catalytic Proton donor. Residues Asp-242, Glu-285, and Asp-312 each contribute to the Mg(2+) site. Lys-337, Arg-366, Ser-367, and Lys-388 together coordinate (2R)-2-phosphoglycerate. Residue Lys-337 is the Proton acceptor of the active site.

This sequence belongs to the enolase family. Mg(2+) serves as cofactor.

Its subcellular location is the cytoplasm. The protein resides in the secreted. It is found in the cell surface. The catalysed reaction is (2R)-2-phosphoglycerate = phosphoenolpyruvate + H2O. The protein operates within carbohydrate degradation; glycolysis; pyruvate from D-glyceraldehyde 3-phosphate: step 4/5. Catalyzes the reversible conversion of 2-phosphoglycerate (2-PG) into phosphoenolpyruvate (PEP). It is essential for the degradation of carbohydrates via glycolysis. The sequence is that of Enolase from Maridesulfovibrio salexigens (strain ATCC 14822 / DSM 2638 / NCIMB 8403 / VKM B-1763) (Desulfovibrio salexigens).